Consider the following 194-residue polypeptide: Peptidyl-tRNA hydrolase (194 aa).

Y19 lines the tRNA pocket. H24 acts as the Proton acceptor in catalysis. TRNA-binding residues include F69, N71, and N117.

Belongs to the PTH family. In terms of assembly, monomer.

The protein localises to the cytoplasm. The catalysed reaction is an N-acyl-L-alpha-aminoacyl-tRNA + H2O = an N-acyl-L-amino acid + a tRNA + H(+). In terms of biological role, hydrolyzes ribosome-free peptidyl-tRNAs (with 1 or more amino acids incorporated), which drop off the ribosome during protein synthesis, or as a result of ribosome stalling. Its function is as follows. Catalyzes the release of premature peptidyl moieties from peptidyl-tRNA molecules trapped in stalled 50S ribosomal subunits, and thus maintains levels of free tRNAs and 50S ribosomes. This is Peptidyl-tRNA hydrolase from Neorickettsia sennetsu (strain ATCC VR-367 / Miyayama) (Ehrlichia sennetsu).